Consider the following 85-residue polypeptide: Small ribosomal subunit protein bS20 (85 aa).

It belongs to the bacterial ribosomal protein bS20 family.

Binds directly to 16S ribosomal RNA. This Cytophaga hutchinsonii (strain ATCC 33406 / DSM 1761 / CIP 103989 / NBRC 15051 / NCIMB 9469 / D465) protein is Small ribosomal subunit protein bS20.